Here is a 194-residue protein sequence, read N- to C-terminus: Ras-like protein rasS (194 aa).

Gly10–Ser17 provides a ligand contact to GTP. Residues Tyr32–Tyr40 carry the Effector region motif. GTP-binding positions include Asp57–Gln61 and Asn116–Asp119. Positions Arg168–Leu194 are disordered. Over residues Gln169–Asn180 the composition is skewed to low complexity. Position 191 is a cysteine methyl ester (Cys191). Cys191 is lipidated: S-geranylgeranyl cysteine. Positions Asn192 to Leu194 are cleaved as a propeptide — removed in mature form.

Belongs to the small GTPase superfamily. Ras family.

It is found in the cell membrane. It catalyses the reaction GTP + H2O = GDP + phosphate + H(+). Functionally, ras proteins bind GDP/GTP and possess intrinsic GTPase activity. The chain is Ras-like protein rasS (rasS) from Dictyostelium discoideum (Social amoeba).